Here is a 489-residue protein sequence, read N- to C-terminus: uncharacterized protein (489 aa).

One can recognise a 2Fe-2S ferredoxin-type domain in the interval 2–84 (IKITVKRFNG…GMIIEPLRGF (83 aa)). [2Fe-2S] cluster is bound by residues C48, C53, C56, and C68. 4Fe-4S ferredoxin-type domains lie at 123 to 155 (KYVE…YPGP) and 177 to 205 (TAYF…IVHR). Residues C134, C137, C140, C144, C186, C189, C192, and C196 each contribute to the [4Fe-4S] cluster site.

The protein belongs to the succinate dehydrogenase/fumarate reductase iron-sulfur protein family.

This is an uncharacterized protein from Methanocaldococcus jannaschii (strain ATCC 43067 / DSM 2661 / JAL-1 / JCM 10045 / NBRC 100440) (Methanococcus jannaschii).